We begin with the raw amino-acid sequence, 159 residues long: Protein RseC (159 aa).

Topologically, residues 1-72 are cytoplasmic; that stretch reads MIKEWATVVS…QKVELGIAEG (72 aa). A helical membrane pass occupies residues 73–95; that stretch reads SLLSSALLVYMSPLVGLFLIASL. The Periplasmic segment spans residues 96 to 98; sequence FQL. Residues 99-121 traverse the membrane as a helical segment; sequence LFASDVAALCGAILGGIGGFLIA. Topologically, residues 122 to 159 are cytoplasmic; that stretch reads RGYSRKFAARAEWQPIILSVALPPGLVRFETSSEDASQ.

This sequence belongs to the RseC family.

Its subcellular location is the cell inner membrane. In terms of biological role, may play a role in reduction of the SoxR iron-sulfur cluster. May work together with the RsxABCDGE complex. The chain is Protein RseC from Escherichia coli (strain K12).